The primary structure comprises 1034 residues: Phosphoenolpyruvate carboxylase (1034 aa).

Residues His-203 and Lys-680 contribute to the active site.

Belongs to the PEPCase type 1 family. Mg(2+) is required as a cofactor.

The enzyme catalyses oxaloacetate + phosphate = phosphoenolpyruvate + hydrogencarbonate. In terms of biological role, forms oxaloacetate, a four-carbon dicarboxylic acid source for the tricarboxylic acid cycle. In Synechocystis sp. (strain ATCC 27184 / PCC 6803 / Kazusa), this protein is Phosphoenolpyruvate carboxylase (ppc).